Reading from the N-terminus, the 232-residue chain is 7-cyano-7-deazaguanine synthase (232 aa).

7–17 contacts ATP; that stretch reads CSGGLDSVSLA. Zn(2+) contacts are provided by Cys-185, Cys-193, Cys-196, and Cys-199.

The protein belongs to the QueC family. Zn(2+) serves as cofactor.

It carries out the reaction 7-carboxy-7-deazaguanine + NH4(+) + ATP = 7-cyano-7-deazaguanine + ADP + phosphate + H2O + H(+). It participates in purine metabolism; 7-cyano-7-deazaguanine biosynthesis. In terms of biological role, catalyzes the ATP-dependent conversion of 7-carboxy-7-deazaguanine (CDG) to 7-cyano-7-deazaguanine (preQ(0)). This is 7-cyano-7-deazaguanine synthase from Brucella abortus (strain S19).